The sequence spans 287 residues: Fructose-1,6-bisphosphatase class 1 (287 aa).

Mg(2+) contacts are provided by Glu-67, Asp-87, Leu-89, and Asp-90. Residues 90–93 (DGSS), Tyr-195, and Lys-225 contribute to the substrate site. Glu-231 provides a ligand contact to Mg(2+).

The protein belongs to the FBPase class 1 family. In terms of assembly, homotetramer. It depends on Mg(2+) as a cofactor.

It localises to the cytoplasm. The enzyme catalyses beta-D-fructose 1,6-bisphosphate + H2O = beta-D-fructose 6-phosphate + phosphate. It functions in the pathway carbohydrate biosynthesis; gluconeogenesis. The protein is Fructose-1,6-bisphosphatase class 1 of Halobacterium salinarum (strain ATCC 29341 / DSM 671 / R1).